The following is a 580-amino-acid chain: TRAF-type zinc finger domain-containing protein 1 (580 aa).

Ala-2 bears the N-acetylalanine mark. Residues 27–103 form a TRAF-type zinc finger; the sequence is IHEIHCQRNI…DLELSVLKLK (77 aa). Ser-190 carries the post-translational modification Phosphoserine. Polar residues predominate over residues 197–209; it reads TTNQRSMTAQFPI. A disordered region spans residues 197-236; it reads TTNQRSMTAQFPIQNNLLEEQERQERNRSRQTPKERGEDS. Positions 216 to 235 are enriched in basic and acidic residues; that stretch reads EQERQERNRSRQTPKERGED. Phosphoserine is present on residues Ser-326, Ser-414, and Ser-429. Residues 392–580 form a disordered region; the sequence is PATANNHVSE…GAGDAEEEEE (189 aa). Positions 409–419 are enriched in basic and acidic residues; sequence QPRETSPELPK. Over residues 453-463 the composition is skewed to low complexity; it reads PPNNTTAPPNR. The residue at position 469 (Ser-469) is a Phosphoserine.

As to quaternary structure, interacts with MAVS, TICAM1, TRAF1, TRAF2, TRAF3 and TRAF6.

In terms of biological role, negative feedback regulator that controls excessive innate immune responses. Regulates both Toll-like receptor 4 (TLR4) and DDX58/RIG1-like helicases (RLH) pathways. May inhibit the LTR pathway by direct interaction with TRAF6 and attenuation of NF-kappa-B activation. May negatively regulate the RLH pathway downstream from MAVS and upstream of NF-kappa-B and IRF3. This is TRAF-type zinc finger domain-containing protein 1 (TRAFD1) from Bos taurus (Bovine).